The following is a 345-amino-acid chain: Phosphoribosylformylglycinamidine cyclo-ligase (345 aa).

It belongs to the AIR synthase family.

It localises to the cytoplasm. It carries out the reaction 2-formamido-N(1)-(5-O-phospho-beta-D-ribosyl)acetamidine + ATP = 5-amino-1-(5-phospho-beta-D-ribosyl)imidazole + ADP + phosphate + H(+). It functions in the pathway purine metabolism; IMP biosynthesis via de novo pathway; 5-amino-1-(5-phospho-D-ribosyl)imidazole from N(2)-formyl-N(1)-(5-phospho-D-ribosyl)glycinamide: step 2/2. The sequence is that of Phosphoribosylformylglycinamidine cyclo-ligase from Limosilactobacillus fermentum (strain NBRC 3956 / LMG 18251) (Lactobacillus fermentum).